Reading from the N-terminus, the 198-residue chain is Synaptobrevin homolog YKT6 (198 aa).

The 119-residue stretch at 8 to 126 (VLYKGEAKVV…TIHYPALDGH (119 aa)) folds into the Longin domain. The v-SNARE coiled-coil homology domain maps to 138–198 (PMTKVQAELD…RKQNSCCAIM (61 aa)). Serine 159 carries the post-translational modification Phosphoserine. The S-palmitoyl cysteine moiety is linked to residue cysteine 194. Cysteine 195 carries the post-translational modification Cysteine methyl ester. Residue cysteine 195 is the site of S-farnesyl cysteine attachment. A propeptide spans 196 to 198 (AIM) (removed in mature form).

Belongs to the synaptobrevin family. As to quaternary structure, identified in 2 different SNARE complexes; the first one composed of GOSR1, GOSR2 and STX5 and the second one composed of BET1L, GOSR1 and STX5. Post-translationally, palmitoylated; catalyzes its own palmitoylation. Palmitoylation is required for Golgi targeting. In terms of processing, farnesylation is required for Golgi targeting.

It is found in the cytoplasm. The protein localises to the cytosol. Its subcellular location is the cytoplasmic vesicle membrane. It localises to the golgi apparatus membrane. In terms of biological role, vesicular soluble NSF attachment protein receptor (v-SNARE) mediating vesicle docking and fusion to a specific acceptor cellular compartment. Functions in endoplasmic reticulum to Golgi transport; as part of a SNARE complex composed of GOSR1, GOSR2 and STX5. Functions in early/recycling endosome to TGN transport; as part of a SNARE complex composed of BET1L, GOSR1 and STX5. Has a S-palmitoyl transferase activity. In Homo sapiens (Human), this protein is Synaptobrevin homolog YKT6 (YKT6).